The chain runs to 212 residues: Ras-related protein Rab-2A (212 aa).

Positions 16, 17, 18, 19, 20, 21, and 38 each coordinate GTP. Serine 20 contributes to the Mg(2+) binding site. Positions 37 to 42 (LTIGVE) match the Switch 1 motif. The Mg(2+) site is built by threonine 38 and aspartate 61. The short motif at 63–72 (AGQESFRSIT) is the Switch 2 element. Residues glycine 64, asparagine 119, lysine 120, aspartate 122, alanine 150, and lysine 151 each coordinate GTP. 2 S-geranylgeranyl cysteine lipidation sites follow: cysteine 211 and cysteine 212.

The protein belongs to the small GTPase superfamily. Rab family. In terms of assembly, interacts with PRKCI. Interacts with TRIP11. Interacts (in GTP-bound form) with GARIN1B. Requires Mg(2+) as cofactor. Prenylated. Prenylation is required for association with cellular membranes.

Its subcellular location is the endoplasmic reticulum-Golgi intermediate compartment membrane. The protein resides in the melanosome. It is found in the endoplasmic reticulum membrane. The protein localises to the golgi apparatus membrane. It localises to the cytoplasmic vesicle. Its subcellular location is the secretory vesicle. The protein resides in the acrosome. It catalyses the reaction GTP + H2O = GDP + phosphate + H(+). Regulated by guanine nucleotide exchange factors (GEFs) which promote the exchange of bound GDP for free GTP, GTPase activating proteins (GAPs) which increase the GTP hydrolysis activity, and GDP dissociation inhibitors (GDIs) which inhibit the dissociation of the nucleotide from the GTPase. Functionally, the small GTPases Rab are key regulators of intracellular membrane trafficking, from the formation of transport vesicles to their fusion with membranes. Rabs cycle between active GTP-bound and inactive GDP-bound states. In their active state, drive transport of vesicular carriers from donor organelles to acceptor organelles to regulate the membrane traffic that maintains organelle identity and morphology. RAB2A regulates autophagy by promoting autophagosome-lysosome fusion via recruitment of the HOPS endosomal tethering complex; this process involves autophagosomal RAB2A and lysosomal RAB39A recruitment of HOPS subcomplexes VPS39-VPS11 and VPS41-VPS16-VPS18-VPS33A, respectively, which assemble into a functional complex to mediate membrane tethering and SNAREs-driven membrane fusion. Required for protein transport from the endoplasmic reticulum to the Golgi complex. Regulates the compacted morphology of the Golgi. Together with RAB2B, redundantly required for efficient autophagic flux. This Gallus gallus (Chicken) protein is Ras-related protein Rab-2A (RAB2A).